The following is a 342-amino-acid chain: N-acetyl-gamma-glutamyl-phosphate reductase (342 aa).

Residue Cys-149 is part of the active site.

The protein belongs to the NAGSA dehydrogenase family. Type 1 subfamily.

It is found in the cytoplasm. The enzyme catalyses N-acetyl-L-glutamate 5-semialdehyde + phosphate + NADP(+) = N-acetyl-L-glutamyl 5-phosphate + NADPH + H(+). It participates in amino-acid biosynthesis; L-arginine biosynthesis; N(2)-acetyl-L-ornithine from L-glutamate: step 3/4. Its function is as follows. Catalyzes the NADPH-dependent reduction of N-acetyl-5-glutamyl phosphate to yield N-acetyl-L-glutamate 5-semialdehyde. In Nitrosomonas eutropha (strain DSM 101675 / C91 / Nm57), this protein is N-acetyl-gamma-glutamyl-phosphate reductase.